Reading from the N-terminus, the 218-residue chain is Sodium channel regulatory subunit beta-1 (218 aa).

Residues 1 to 18 form the signal peptide; it reads MGTLLALVVGAVLVSSAW. Residues 19–157 are Extracellular-facing; the sequence is GGCVEVDSET…DKANRDMASI (139 aa). 2 cysteine pairs are disulfide-bonded: C21–C43 and C40–C121. The Ig-like C2-type domain maps to 22-150; it reads VEVDSETEAV…KIHLEVVDKA (129 aa). 4 N-linked (GlcNAc...) asparagine glycosylation sites follow: N93, N110, N114, and N135. A helical transmembrane segment spans residues 158–179; that stretch reads VSEIMMYVLIVVLTIWLVAEMV. Residues 180–218 are Cytoplasmic-facing; that stretch reads YCYKKIAAATEAAAQENASEYLAITSESKENCTGVQVAE.

The protein belongs to the sodium channel auxiliary subunit SCN1B (TC 8.A.17) family. A voltage-gated sodium (Nav) channel consists of an ion-conducting pore-forming alpha subunit functional on its own that is regulated by one or more beta subunits. Interacts with SCN1A; regulatory subunit of SCN1A/Nav1.1. Interacts with SCN3A; regulatory subunit of SCN3A/Nav1.3. Interacts with SCN4A; regulatory subunit of SCN4A/Nav1.4. Interacts with SCN5A; regulatory subunit of SCN5A/Nav1.5. Interacts with SCN8A; regulatory subunit of SCN8A/Nav1.6. Interacts with SCN9A; regulatory subunit of SCN9A/Nav1.7. Interacts with SCN10A; regulatory subunit of SCN10A/Nav1.8. Interacts with NFASC. Interacts with TMEM65. Detected in brain (at protein level). Expressed in brain, heart, skeletal muscle and spinal cord.

It localises to the cell membrane. The protein resides in the perikaryon. It is found in the cell projection. Its subcellular location is the axon. Regulatory subunit of multiple voltage-gated sodium (Nav) channels directly mediating the depolarization of excitable membranes. Navs, also called VGSCs (voltage-gated sodium channels) or VDSCs (voltage-dependent sodium channels), operate by switching between closed and open conformations depending on the voltage difference across the membrane. In the open conformation they allow Na(+) ions to selectively pass through the pore, along their electrochemical gradient. The influx of Na+ ions provokes membrane depolarization, initiating the propagation of electrical signals throughout cells and tissues. The accessory beta subunits participate in localization and functional modulation of the Nav channels. Modulates the activity of SCN1A/Nav1.1, SCN2A/Nav1.2, SCN3A/Nav1.3, SCN4A/Nav1.4, SCN5A/Nav1.5, SCN8A/Nav1.6, SCN9A/Nav1.7 and SCN10A/Nav1.8. The sequence is that of Sodium channel regulatory subunit beta-1 from Rattus norvegicus (Rat).